The following is a 357-amino-acid chain: Acyl-coenzyme A diphosphatase NUDT19 (357 aa).

The Nudix hydrolase domain occupies 10-242 (AATVMLAAGW…IWLAPPQFYE (233 aa)). The segment at 72–93 (PRFGLGPEPPRQPPFPGLSHGD) is disordered. Over residues 78–87 (PEPPRQPPFP) the composition is skewed to pro residues. The short motif at 97 to 118 (AALPDDVALRICAIREAFEEAG) is the Nudix box element. Mg(2+) contacts are provided by Glu-112 and Glu-116. Lys-300 is modified (N6-succinyllysine). Positions 355–357 (AHL) match the Microbody targeting signal motif.

Belongs to the Nudix hydrolase family. In terms of assembly, monomer. It depends on Mg(2+) as a cofactor. Mn(2+) is required as a cofactor. In terms of tissue distribution, highly expressed in the kidneys, with lower levels in skeletal muscle and brain (at protein level).

The protein localises to the peroxisome. The catalysed reaction is an acyl-CoA + H2O = an acyl-4'-phosphopantetheine + adenosine 3',5'-bisphosphate + 2 H(+). It catalyses the reaction CoA + H2O = (R)-4'-phosphopantetheine + adenosine 3',5'-bisphosphate + 2 H(+). It carries out the reaction hexanoyl-CoA + H2O = hexanoyl-4'-phosphopantetheine + adenosine 3',5'-bisphosphate + 2 H(+). The enzyme catalyses octanoyl-CoA + H2O = S-octanoyl-4'-phosphopantetheine + adenosine 3',5'-bisphosphate + 2 H(+). The catalysed reaction is butanoyl-CoA + H2O = S-butanoyl-4'-phosphopantetheine + adenosine 3',5'-bisphosphate + 2 H(+). It catalyses the reaction propanoyl-CoA + H2O = propanoyl-4'-phosphopantetheine + adenosine 3',5'-bisphosphate + 2 H(+). It carries out the reaction malonyl-CoA + H2O = malonyl-4'-phosphopantetheine + adenosine 3',5'-bisphosphate + 2 H(+). The enzyme catalyses succinyl-CoA + H2O = succinyl-4'-phosphopantetheine + adenosine 3',5'-bisphosphate + 2 H(+). The catalysed reaction is choloyl-CoA + H2O = S-choloyl-4'-phosphopantetheine + adenosine 3',5'-bisphosphate + 2 H(+). It catalyses the reaction 4,8-dimethylnonanoyl-CoA + H2O = S-(4,8-dimethylnonanoyl)-4'-phosphopantetheine + adenosine 3',5'-bisphosphate + 2 H(+). It carries out the reaction (9Z,12Z,15Z)-octadecatrienoyl-CoA + H2O = S-(9Z,12Z,15Z-octadecatrienoyl)-4'-phosphopantetheine + adenosine 3',5'-bisphosphate + 2 H(+). The enzyme catalyses (9Z,12Z)-octadecadienoyl-CoA + H2O = S-(9Z,12Z-octadecadienoyl)-4'-phosphopantetheine + adenosine 3',5'-bisphosphate + 2 H(+). The catalysed reaction is (9Z)-hexadecenoyl-CoA + H2O = S-(9Z-hexadecenoyl)-4'-phosphopantetheine + adenosine 3',5'-bisphosphate + 2 H(+). It catalyses the reaction (9Z)-tetradecenoyl-CoA + H2O = S-(9Z-tetradecenoyl)-4'-phosphopantetheine + adenosine 3',5'-bisphosphate + 2 H(+). It carries out the reaction (6Z)-octenoyl-CoA + H2O = S-(6Z-octenoyl)-4'-phosphopantetheine + adenosine 3',5'-bisphosphate + 2 H(+). The enzyme catalyses hexadecanoyl-CoA + H2O = S-hexadecanoyl-4'-phosphopantetheine + adenosine 3',5'-bisphosphate + 2 H(+). The catalysed reaction is tetradecanoyl-CoA + H2O = tetradecanoyl-4'-phosphopantetheine + adenosine 3',5'-bisphosphate + 2 H(+). It catalyses the reaction dodecanoyl-CoA + H2O = S-dodecanoyl-4'-phosphopantetheine + adenosine 3',5'-bisphosphate + 2 H(+). It carries out the reaction a 5'-end CoA-ribonucleoside in mRNA + H2O = a 5'-end phospho-adenosine-phospho-ribonucleoside in mRNA + (R)-4'-phosphopantetheine + 2 H(+). With respect to regulation, inhibited by chenodeoxycholic acid (CDCA) and its conjugated derivatives, taurochenodeoxycholic acid and glycochenodeoxycholic acid. Inhibited by fluoride. In terms of biological role, fatty acyl-coenzyme A (CoA) diphosphatase that hydrolyzes fatty acyl-CoA to yield acyl-4'-phosphopantetheine and adenosine 3',5'-bisphosphate. Mediates the hydrolysis of a wide range of CoA esters, including choloyl-CoA and branched-chain fatty-acyl-CoA esters and at low substrate concentrations medium and long-chain fatty-acyl-CoA esters are the primary substrates. Highest activity seen with medium-chain acyl-CoA esters and higher rates of activity seen with the unsaturated acyl-CoA esters compared with the saturated esters. Exhibits decapping activity towards dpCoA-capped RNAs in vitro. This Mus musculus (Mouse) protein is Acyl-coenzyme A diphosphatase NUDT19 (Nudt19).